Consider the following 89-residue polypeptide: Small ribosomal subunit protein uS15 (89 aa).

Over residues 1–18 the composition is skewed to basic and acidic residues; that stretch reads MSLDTAEKQKLIENHQVH. Residues 1–23 form a disordered region; the sequence is MSLDTAEKQKLIENHQVHPTDTG.

The protein belongs to the universal ribosomal protein uS15 family. In terms of assembly, part of the 30S ribosomal subunit. Forms a bridge to the 50S subunit in the 70S ribosome, contacting the 23S rRNA.

Functionally, one of the primary rRNA binding proteins, it binds directly to 16S rRNA where it helps nucleate assembly of the platform of the 30S subunit by binding and bridging several RNA helices of the 16S rRNA. Forms an intersubunit bridge (bridge B4) with the 23S rRNA of the 50S subunit in the ribosome. This chain is Small ribosomal subunit protein uS15, found in Prochlorococcus marinus (strain AS9601).